The following is a 462-amino-acid chain: uncharacterized protein (462 aa).

2 helical membrane-spanning segments follow: residues 12-32 (WWWL…APTV) and 257-277 (GLCV…LELV).

It belongs to the HHV-5 US29 protein family.

The protein localises to the host membrane. This is an uncharacterized protein from Human cytomegalovirus (strain AD169) (HHV-5).